The primary structure comprises 214 residues: 3,4-dihydroxy-2-butanone 4-phosphate synthase (214 aa).

D-ribulose 5-phosphate is bound by residues 37–38 (RE), Asp-42, 150–154 (RRGHT), and Glu-174. Residue Glu-38 participates in Mg(2+) binding. Residue His-153 participates in Mg(2+) binding.

It belongs to the DHBP synthase family. Homodimer. Mg(2+) is required as a cofactor. Requires Mn(2+) as cofactor.

It carries out the reaction D-ribulose 5-phosphate = (2S)-2-hydroxy-3-oxobutyl phosphate + formate + H(+). It functions in the pathway cofactor biosynthesis; riboflavin biosynthesis; 2-hydroxy-3-oxobutyl phosphate from D-ribulose 5-phosphate: step 1/1. Catalyzes the conversion of D-ribulose 5-phosphate to formate and 3,4-dihydroxy-2-butanone 4-phosphate. The sequence is that of 3,4-dihydroxy-2-butanone 4-phosphate synthase from Nitratidesulfovibrio vulgaris (strain ATCC 29579 / DSM 644 / CCUG 34227 / NCIMB 8303 / VKM B-1760 / Hildenborough) (Desulfovibrio vulgaris).